Consider the following 536-residue polypeptide: Coilin (536 aa).

A disordered region spans residues 96-316 (AETCNDGAQN…QHSQSPTSDS (221 aa)). The span at 171–180 (KTHKGKRTKK) shows a compositional bias: basic residues. The segment covering 181-192 (KSEAPIENPPDK) has biased composition (basic and acidic residues). Low complexity predominate over residues 213–238 (QTSSSDSSDTSSCSDQPTPTTQQKPQ). 2 stretches are compositionally biased toward polar residues: residues 239–257 (SSAK…THSV) and 303–316 (THIQ…TSDS). Tandem repeats lie at residues 353–358 (RGRGRG) and 380–385 (RGRGRG). Residues 353-385 (RGRGRGEDFSWRGQRGRWFRGQGNNSNRGRGRG) are 2 X 6 AA repeats of R-G-R-G-R-G. Positions 368-387 (GRWFRGQGNNSNRGRGRGDS) are disordered. A compositionally biased stretch (low complexity) spans 371–380 (FRGQGNNSNR). A Tudor; atypical domain is found at 425–523 (DYSSLPLLAA…VMLNWNTLIE (99 aa)).

This sequence belongs to the coilin family. In terms of tissue distribution, expressed in both oocytes and somatic cells.

It localises to the nucleus. This is Coilin (coil) from Xenopus laevis (African clawed frog).